Here is a 275-residue protein sequence, read N- to C-terminus: Large ribosomal subunit protein uL2 (275 aa).

The disordered stretch occupies residues 223 to 275 (VAMNPIDHPHGGGEGRTSGGRHPVSPWGVPTKGYKTRSNKRTDKYIVRRRNKK).

Belongs to the universal ribosomal protein uL2 family. As to quaternary structure, part of the 50S ribosomal subunit. Forms a bridge to the 30S subunit in the 70S ribosome.

Its function is as follows. One of the primary rRNA binding proteins. Required for association of the 30S and 50S subunits to form the 70S ribosome, for tRNA binding and peptide bond formation. It has been suggested to have peptidyltransferase activity; this is somewhat controversial. Makes several contacts with the 16S rRNA in the 70S ribosome. In Shewanella woodyi (strain ATCC 51908 / MS32), this protein is Large ribosomal subunit protein uL2.